Consider the following 1299-residue polypeptide: DNA-directed RNA polymerase subunit beta' (1299 aa).

Zn(2+) contacts are provided by cysteine 60, cysteine 62, cysteine 75, and cysteine 78. The interval 188-209 (GAKSDQKRRAKDGAEKEMGQTR) is disordered. Mg(2+) contacts are provided by aspartate 535, aspartate 537, and aspartate 539. 4 residues coordinate Zn(2+): cysteine 882, cysteine 959, cysteine 966, and cysteine 969.

This sequence belongs to the RNA polymerase beta' chain family. The RNAP catalytic core consists of 2 alpha, 1 beta, 1 beta' and 1 omega subunit. When a sigma factor is associated with the core the holoenzyme is formed, which can initiate transcription. Mg(2+) is required as a cofactor. The cofactor is Zn(2+).

It catalyses the reaction RNA(n) + a ribonucleoside 5'-triphosphate = RNA(n+1) + diphosphate. Functionally, DNA-dependent RNA polymerase catalyzes the transcription of DNA into RNA using the four ribonucleoside triphosphates as substrates. This chain is DNA-directed RNA polymerase subunit beta', found in Clavibacter sepedonicus (Clavibacter michiganensis subsp. sepedonicus).